The sequence spans 305 residues: UDP-3-O-acyl-N-acetylglucosamine deacetylase (305 aa).

Residues His-79, His-238, and Asp-242 each coordinate Zn(2+). Catalysis depends on His-265, which acts as the Proton donor.

The protein belongs to the LpxC family. Requires Zn(2+) as cofactor.

It catalyses the reaction a UDP-3-O-[(3R)-3-hydroxyacyl]-N-acetyl-alpha-D-glucosamine + H2O = a UDP-3-O-[(3R)-3-hydroxyacyl]-alpha-D-glucosamine + acetate. It participates in glycolipid biosynthesis; lipid IV(A) biosynthesis; lipid IV(A) from (3R)-3-hydroxytetradecanoyl-[acyl-carrier-protein] and UDP-N-acetyl-alpha-D-glucosamine: step 2/6. Catalyzes the hydrolysis of UDP-3-O-myristoyl-N-acetylglucosamine to form UDP-3-O-myristoylglucosamine and acetate, the committed step in lipid A biosynthesis. The polypeptide is UDP-3-O-acyl-N-acetylglucosamine deacetylase (Vibrio parahaemolyticus serotype O3:K6 (strain RIMD 2210633)).